The sequence spans 828 residues: Periplasmic nitrate reductase (828 aa).

Positions 1-31 (MKLSRRSFMKANAVAAAAAAAGLSVPGVARA) form a signal peptide, tat-type signal. Residues 39 to 95 (IKWDKAPCRFCGTGCGVLVGTQQGRIVACQGDPDAPVNRGLNCIKGYFLPKIMYGKD) enclose the 4Fe-4S Mo/W bis-MGD-type domain. Residues Cys-46, Cys-49, Cys-53, and Cys-81 each coordinate [4Fe-4S] cluster. Residues Lys-83, Gln-150, Asn-175, Cys-179, 212–219 (WGSNMAEM), 243–247 (STFQH), 262–264 (QSD), Met-372, Gln-376, Asn-482, 508–509 (SD), Lys-531, Asp-558, and 718–727 (TGRVLEHWHT) contribute to the Mo-bis(molybdopterin guanine dinucleotide) site. Phe-794 contributes to the substrate binding site. Positions 802 and 819 each coordinate Mo-bis(molybdopterin guanine dinucleotide).

The protein belongs to the prokaryotic molybdopterin-containing oxidoreductase family. NasA/NapA/NarB subfamily. As to quaternary structure, component of the periplasmic nitrate reductase NapAB complex composed of NapA and NapB. [4Fe-4S] cluster serves as cofactor. It depends on Mo-bis(molybdopterin guanine dinucleotide) as a cofactor. In terms of processing, predicted to be exported by the Tat system. The position of the signal peptide cleavage has not been experimentally proven.

The protein localises to the periplasm. It catalyses the reaction 2 Fe(II)-[cytochrome] + nitrate + 2 H(+) = 2 Fe(III)-[cytochrome] + nitrite + H2O. Functionally, catalytic subunit of the periplasmic nitrate reductase complex NapAB. Receives electrons from NapB and catalyzes the reduction of nitrate to nitrite. The polypeptide is Periplasmic nitrate reductase (Citrobacter koseri (strain ATCC BAA-895 / CDC 4225-83 / SGSC4696)).